A 597-amino-acid chain; its full sequence is DDB1- and CUL4-associated factor 8 (597 aa).

The segment covering 1–24 (MSSKGSSTDGRTDLANGSLSSSPE) has biased composition (polar residues). The interval 1–147 (MSSKGSSTDG…DWVSSETSAL (147 aa)) is disordered. S21 and S22 each carry phosphoserine. The short motif at 39-50 (IEVEASDLSLSL) is the Nuclear export signal element. The span at 65–99 (RGTDTESSGEDKDSDSMEDTGHYSINDENRVHDRS) shows a compositional bias: basic and acidic residues. At S99 the chain carries Phosphoserine. Positions 100 to 112 (EEEEEEEEEEEEE) are enriched in acidic residues. Residues 114–122 (PRRRVQRKR) carry the Nuclear localization signal motif. The segment covering 124 to 137 (NRDQDSSDDERALE) has biased composition (basic and acidic residues). Phosphoserine occurs at positions 129 and 130. WD repeat units lie at residues 191 to 230 (GHTG…PVLD), 234 to 275 (GHKS…CCKN), 281 to 321 (QHKG…PASK), 329 to 369 (EKKV…ENEN), 385 to 424 (ESKA…GAQY), 432 to 472 (RNNA…IIQF), and 476 to 515 (DKGG…STEL). R204 carries the post-translational modification Omega-N-methylarginine; by PRMT1. The segment at 558–597 (HRRWREPGVGATDADSDESPSSSDTSDEEEGPDRVQCMPS) is disordered.

This sequence belongs to the WD repeat DCAF8 family. As to quaternary structure, interacts with DDB1, CUL4A and CUL4B. Interacts with KPNA1, KPNB1 and XPO1.

It is found in the nucleus. The protein resides in the cytoplasm. Its pathway is protein modification; protein ubiquitination. May function as a substrate receptor for CUL4-DDB1 E3 ubiquitin-protein ligase complex. The protein is DDB1- and CUL4-associated factor 8 (DCAF8) of Homo sapiens (Human).